Consider the following 542-residue polypeptide: MFS thioclapurine efflux transporter tcpA (542 aa).

The span at 1–10 (MATVGTEEKN) shows a compositional bias: basic and acidic residues. The tract at residues 1-24 (MATVGTEEKNPIGSASNTAEPNVT) is disordered. Residues 13–24 (GSASNTAEPNVT) show a composition bias toward polar residues. N-linked (GlcNAc...) asparagine glycosylation is present at N22. The next 3 helical transmembrane spans lie at 32-52 (SGFK…LCGL), 75-97 (GWYT…KLYT), and 103-123 (MILL…AAAP). N124 carries N-linked (GlcNAc...) asparagine glycosylation. 6 helical membrane-spanning segments follow: residues 133-153 (AIAG…LVHA), 161-181 (ALLG…PFIG), 193-213 (CFII…FFVF), 234-254 (IPEI…LQWG), 265-285 (IIAL…LQVL), and 307-327 (IFAL…PIYF). An N-linked (GlcNAc...) asparagine glycan is attached at N332. Residues 339 to 359 (GVNVMPLILGFLVMSIISGVI) traverse the membrane as a helical segment. A glycan (N-linked (GlcNAc...) asparagine) is linked at N361. Transmembrane regions (helical) follow at residues 370-390 (MFLC…FDVG), 396-416 (WIGY…QPIV), 427-447 (VPFG…IFVA), and 500-520 (VLGQ…LGSL).

This sequence belongs to the major facilitator superfamily.

It localises to the cell membrane. Functionally, MFS efflux transporter probably involved in thioclapurine export. This Claviceps purpurea (strain 20.1) (Ergot fungus) protein is MFS thioclapurine efflux transporter tcpA.